The sequence spans 37 residues: Large ribosomal subunit protein bL36 (37 aa).

Belongs to the bacterial ribosomal protein bL36 family.

This Leptospira interrogans serogroup Icterohaemorrhagiae serovar Lai (strain 56601) protein is Large ribosomal subunit protein bL36.